The sequence spans 373 residues: Erythronate-4-phosphate dehydrogenase (373 aa).

2 residues coordinate substrate: serine 45 and threonine 67. NAD(+) is bound by residues aspartate 147, 206–208, and aspartate 232; that span reads ASR. Arginine 208 is an active-site residue. The active site involves glutamate 237. The Proton donor role is filled by histidine 254. Glycine 257 lines the NAD(+) pocket. Tyrosine 258 is a substrate binding site.

This sequence belongs to the D-isomer specific 2-hydroxyacid dehydrogenase family. PdxB subfamily. In terms of assembly, homodimer.

It localises to the cytoplasm. The enzyme catalyses 4-phospho-D-erythronate + NAD(+) = (R)-3-hydroxy-2-oxo-4-phosphooxybutanoate + NADH + H(+). The protein operates within cofactor biosynthesis; pyridoxine 5'-phosphate biosynthesis; pyridoxine 5'-phosphate from D-erythrose 4-phosphate: step 2/5. Functionally, catalyzes the oxidation of erythronate-4-phosphate to 3-hydroxy-2-oxo-4-phosphonooxybutanoate. This chain is Erythronate-4-phosphate dehydrogenase, found in Tolumonas auensis (strain DSM 9187 / NBRC 110442 / TA 4).